We begin with the raw amino-acid sequence, 640 residues long: Threonine--tRNA ligase (640 aa).

The TGS domain occupies 1–59 (MKIKVKLPDGKEKEYDRGITPAEIAKELGIKKAIGAVVNGELWDLKRPIENDCELRLVT). Residues 240-531 (DHRKLGPQLE…LIEHFAGAFP (292 aa)) form a catalytic region. Zn(2+)-binding residues include Cys332, His383, and His508.

Belongs to the class-II aminoacyl-tRNA synthetase family. Homodimer. Requires Zn(2+) as cofactor.

It is found in the cytoplasm. It catalyses the reaction tRNA(Thr) + L-threonine + ATP = L-threonyl-tRNA(Thr) + AMP + diphosphate + H(+). In terms of biological role, catalyzes the attachment of threonine to tRNA(Thr) in a two-step reaction: L-threonine is first activated by ATP to form Thr-AMP and then transferred to the acceptor end of tRNA(Thr). Also edits incorrectly charged L-seryl-tRNA(Thr). This Thermotoga maritima (strain ATCC 43589 / DSM 3109 / JCM 10099 / NBRC 100826 / MSB8) protein is Threonine--tRNA ligase.